A 601-amino-acid polypeptide reads, in one-letter code: Sodium-dependent phosphate transport protein 2C (601 aa).

Residues 1-75 (MPNSLAGGQV…RRVVSSFLKA (75 aa)) are Cytoplasmic-facing. S4 is modified (phosphoserine). A helical membrane pass occupies residues 76-96 (CGLLGSLYFFICSLDILSSAF). Topologically, residues 97 to 110 (QLLGSKMAGDIFKD) are extracellular. Residues 111–131 (NVVLSNPVAGLVIGVLVTVLV) form a helical membrane-spanning segment. At 132–187 (QSSSTSSSIVVSMVASKLLTVQVSVPIIMGVNVGTSITSTLVSMAQSGDRDEFQRA) the chain is on the cytoplasmic side. The chain crosses the membrane as a helical span at residues 188–208 (FSGSAVHGIFNWLTVLVLLPL). The Extracellular segment spans residues 209-324 (ESATAALERL…FAGSKLTDLA (116 aa)). N-linked (GlcNAc...) asparagine glycosylation is found at N264, N267, and N299. A disulfide bridge links C275 with C311. Residues 325-345 (VGFILLAGSLLVLCVCLVLIV) form a helical membrane-spanning segment. Residues 346–369 (KLLNSVLKGRIAQAVKTVINADFP) lie on the Cytoplasmic side of the membrane. A helical membrane pass occupies residues 370–390 (FPFGWLSGYLAILVGAGLTFL). At 391–441 (LQSSSVFTAAIVPLMGVGVIDLERAYPLFLGSNIGTTTTALLAALASPADM) the chain is on the extracellular side. A helical membrane pass occupies residues 442–462 (LIFAVQVALIHFFFNLAGILL). Residues 463–487 (WYLVPVLRLPIPLAKRFGNLTAQYR) lie on the Cytoplasmic side of the membrane. Residues 488–508 (WVAIVYLLLTFLLLPLAAFGL) form a helical membrane-spanning segment. At 509 to 512 (SLAG) the chain is on the extracellular side. Residues 513–533 (GTVLAAVGGPLVGLVLLIILV) form a helical membrane-spanning segment. At 534-601 (NVLQQHRPSW…NPQVIASQQL (68 aa)) the chain is on the cytoplasmic side.

This sequence belongs to the SLC34A transporter family. As to expression, expressed only in the kidney.

Its subcellular location is the apical cell membrane. It catalyses the reaction 2 Na(+)(out) + phosphate(out) = 2 Na(+)(in) + phosphate(in). Its function is as follows. Involved in actively transporting phosphate into cells via Na(+) cotransport in the renal brush border membrane. The cotransport has a Na(+):Pi stoichiometry of 2:1 and is electroneutral. This is Sodium-dependent phosphate transport protein 2C (Slc34a3) from Mus musculus (Mouse).